A 190-amino-acid polypeptide reads, in one-letter code: Guanylate kinase (190 aa).

Positions 8-188 (GRLVILAGPS…AVSAIKAVLL (181 aa)) constitute a Guanylate kinase-like domain. Residue 15–22 (GPSAVGKS) coordinates ATP.

Belongs to the guanylate kinase family.

Its subcellular location is the cytoplasm. It catalyses the reaction GMP + ATP = GDP + ADP. Its function is as follows. Essential for recycling GMP and indirectly, cGMP. This Corynebacterium efficiens (strain DSM 44549 / YS-314 / AJ 12310 / JCM 11189 / NBRC 100395) protein is Guanylate kinase.